A 2542-amino-acid polypeptide reads, in one-letter code: Unconventional myosin-IXa (2542 aa).

Residues 14–112 (NEHTLRIYPG…YRFLLREKNL (99 aa)) form the Ras-associating domain. A Myosin motor domain is found at 146–1017 (KDFDDLCSLP…ERQHLQDLLH (872 aa)). The helical transmembrane segment at 175–195 (IYTYVGSILIAINPFKFLPIY) threads the bilayer. 239–246 (GESGSGKT) is a binding site for ATP. Serine 755 is subject to Phosphoserine. An actin-binding region spans residues 908 to 919 (QAEPYFVKCIRS). 5 IQ domains span residues 1021–1041 (LRRI…QQFL), 1043–1072 (LRQA…EKDA), 1075–1104 (MASA…AAVI), 1116–1145 (RHKA…KIIL), and 1139–1168 (QRNK…EKLR). The tract at residues 1022 to 1163 (RRIVLLQRWF…RARQRCNALK (142 aa)) is neck or regulatory domain. The tail stretch occupies residues 1164 to 2505 (EEKLREAKLE…LKNVKNSPQK (1342 aa)). Over residues 1221-1240 (RESSMDFSKESPDKQQERGR) the composition is skewed to basic and acidic residues. A disordered region spans residues 1221–1276 (RESSMDFSKESPDKQQERGRRQSGTDLQEDVIVRQRPKSLEDLHQKKVGRAKRESR). The residue at position 1243 (serine 1243) is a Phosphoserine. Threonine 1245 carries the post-translational modification Phosphothreonine. Serine 1259 carries the post-translational modification Phosphoserine. Residues 1265–1292 (QKKVGRAKRESRRMRELEQAIFSLELLK) are a coiled coil. Positions 1266 to 1276 (KKVGRAKRESR) are enriched in basic residues. 2 positions are modified to phosphoserine: serine 1300 and serine 1318. The segment at 1342–1401 (KSKPESLILDEGELKISSPNTFTNPKSQDNALSASSETSSTLAGKGASSDSEHLKNGTAK) is disordered. Residues 1358–1371 (SSPNTFTNPKSQDN) are compositionally biased toward polar residues. Residues 1372 to 1384 (ALSASSETSSTLA) show a composition bias toward low complexity. The segment covering 1391–1401 (DSEHLKNGTAK) has biased composition (basic and acidic residues). Residues 1492 to 1539 (TVLKKLEKLNIEKEKRQKQLQQQNEKEMMEQIRQQTDILEKERKAFKT) are a coiled coil. Disordered stretches follow at residues 1650–1675 (RSTE…REGS), 1693–1727 (SGNP…SVDE), 1767–1793 (GKQG…PGPD), and 1806–1841 (QYHP…KRGV). Residues 1665-1675 (HRSDDPSREGS) show a composition bias toward basic and acidic residues. The span at 1715 to 1726 (QQETSQRFSSVD) shows a compositional bias: polar residues. Residues 1821 to 1833 (CRKEFKENKEPSP) are compositionally biased toward basic and acidic residues. A Phosphoserine modification is found at serine 1950. Phorbol-ester/DAG-type zinc fingers lie at residues 2001–2050 (GHIF…TAKC) and 2068–2119 (SRLT…DTDA). A Rho-GAP domain is found at 2065 to 2253 (VELSRLTSED…LIVVEQMNKY (189 aa)). Phosphoserine occurs at positions 2293 and 2296. Residues 2324-2360 (TDQQQAAMQQEEKVLTEQIENLQKEKEELTFEMLVLE) adopt a coiled-coil conformation. The tract at residues 2361–2443 (PRASDDETLE…NTTSSHGTRK (83 aa)) is disordered. Positions 2377 to 2386 (TADSSENLNM) are enriched in polar residues. Over residues 2420-2438 (SLDSVSSSVSSCLSNTTSS) the composition is skewed to low complexity. Phosphoserine is present on serine 2458. A disordered region spans residues 2465-2530 (TEGPLGQAKS…TVDSDCSSTQ (66 aa)).

The protein belongs to the TRAFAC class myosin-kinesin ATPase superfamily. Myosin family. Phosphorylated by ALPK1 following monosodium urate monohydrate (MSU)-induced inflammation. As to expression, expressed in the eye, lung, liver, brain, heart, kidney, skeletal muscle and spleen. No detection was found in liver. In the brain, expressed in the ependymal cells of the third ventricle and the aqueduct.

It localises to the membrane. The protein localises to the cytoplasm. Its subcellular location is the synapse. It is found in the cell projection. The protein resides in the growth cone. Functionally, myosins are actin-based motor molecules with ATPase activity. Unconventional myosins serve in intracellular movements. Regulates Rho by stimulating it's GTPase activity in neurons. Required for the regulation of neurite branching and motor neuron axon guidance. This is Unconventional myosin-IXa (Myo9a) from Mus musculus (Mouse).